Here is a 362-residue protein sequence, read N- to C-terminus: Phosphoserine aminotransferase (362 aa).

Arg-42 lines the L-glutamate pocket. Pyridoxal 5'-phosphate contacts are provided by residues 76–77 (AR), Trp-102, Thr-154, Asp-174, and Gln-197. Lys-198 carries the post-translational modification N6-(pyridoxal phosphate)lysine. Residue 239–240 (NT) participates in pyridoxal 5'-phosphate binding.

It belongs to the class-V pyridoxal-phosphate-dependent aminotransferase family. SerC subfamily. As to quaternary structure, homodimer. The cofactor is pyridoxal 5'-phosphate.

The protein localises to the cytoplasm. The catalysed reaction is O-phospho-L-serine + 2-oxoglutarate = 3-phosphooxypyruvate + L-glutamate. It carries out the reaction 4-(phosphooxy)-L-threonine + 2-oxoglutarate = (R)-3-hydroxy-2-oxo-4-phosphooxybutanoate + L-glutamate. Its pathway is amino-acid biosynthesis; L-serine biosynthesis; L-serine from 3-phospho-D-glycerate: step 2/3. It functions in the pathway cofactor biosynthesis; pyridoxine 5'-phosphate biosynthesis; pyridoxine 5'-phosphate from D-erythrose 4-phosphate: step 3/5. Its function is as follows. Catalyzes the reversible conversion of 3-phosphohydroxypyruvate to phosphoserine and of 3-hydroxy-2-oxo-4-phosphonooxybutanoate to phosphohydroxythreonine. This Buchnera aphidicola subsp. Cinara cedri (strain Cc) protein is Phosphoserine aminotransferase.